We begin with the raw amino-acid sequence, 170 residues long: FMRFamide-like neuropeptides 6 (170 aa).

A signal peptide spans 1-19 (MNSRGLILTLGVVIAVAFA). At glutamine 20 the chain carries Pyrrolidone carboxylic acid. Phenylalanine 39 carries the phenylalanine amide modification. Residues 42–51 (SDGGNPMEME) constitute a propeptide that is removed on maturation. Position 60 is a phenylalanine amide (phenylalanine 60). Positions 63–81 (RSSGGDEQELVGGDDIDME) are excised as a propeptide. Phenylalanine amide is present on phenylalanine 90. A propeptide spanning residues 93-104 (RSGPQEDDMPME) is cleaved from the precursor. Residue phenylalanine 113 is modified to Phenylalanine amide. A propeptide spanning residues 116-136 (RSSDMEVIGNEGVDGDAHDLF) is cleaved from the precursor. The residue at position 145 (phenylalanine 145) is a Phenylalanine amide. Residues 148 to 159 (RSMGEEEDHDMM) constitute a propeptide that is removed on maturation. The interval 150–170 (MGEEEDHDMMKRKSAYMRFGR) is disordered. The segment covering 159–170 (MKRKSAYMRFGR) has biased composition (basic residues). At phenylalanine 168 the chain carries Phenylalanine amide.

Belongs to the FARP (FMRFamide related peptide) family. As to expression, each flp gene is expressed in a distinct set of neurons. Flp-6 is expressed in the ASE sensory neurons, AFD, ASG, PVT and I1 neurons.

Its subcellular location is the secreted. Functionally, FMRFamides and FMRFamide-like peptides are neuropeptides. KSAYMRF-amide has an excitatory effect on dissected pharyngeal myogenic muscle system. The sequence is that of FMRFamide-like neuropeptides 6 from Caenorhabditis elegans.